The chain runs to 565 residues: Urease subunit beta (565 aa).

The region spanning 130–565 (GGIDTHIHFI…LALARKYFMI (436 aa)) is the Urease domain. Ni(2+) contacts are provided by His-135, His-137, and Lys-218. Lys-218 carries the post-translational modification N6-carboxylysine. His-220 is a binding site for substrate. Ni(2+) is bound by residues His-247 and His-273. The Proton donor role is filled by His-321. Residue Asp-361 participates in Ni(2+) binding.

The protein belongs to the metallo-dependent hydrolases superfamily. Urease alpha subunit family. As to quaternary structure, heterohexamer of 3 UreA (alpha) and 3 UreB (beta) subunits. Requires Ni cation as cofactor. Post-translationally, carboxylation allows a single lysine to coordinate two nickel ions.

Its subcellular location is the cytoplasm. It catalyses the reaction urea + 2 H2O + H(+) = hydrogencarbonate + 2 NH4(+). It participates in nitrogen metabolism; urea degradation; CO(2) and NH(3) from urea (urease route): step 1/1. The protein is Urease subunit beta of Campylobacter lari.